Reading from the N-terminus, the 116-residue chain is Co-chaperonin GroES (116 aa).

It belongs to the GroES chaperonin family. Heptamer of 7 subunits arranged in a ring. Interacts with the chaperonin GroEL.

It localises to the cytoplasm. Functionally, together with the chaperonin GroEL, plays an essential role in assisting protein folding. The GroEL-GroES system forms a nano-cage that allows encapsulation of the non-native substrate proteins and provides a physical environment optimized to promote and accelerate protein folding. GroES binds to the apical surface of the GroEL ring, thereby capping the opening of the GroEL channel. This chain is Co-chaperonin GroES, found in Mycoplasma pneumoniae (strain ATCC 29342 / M129 / Subtype 1) (Mycoplasmoides pneumoniae).